The primary structure comprises 101 residues: Small ribosomal subunit protein bS18c (101 aa).

Basic residues predominate over residues 1–19; the sequence is MNKSKRPFTKSKRSFRRRL. Residues 1 to 23 are disordered; sequence MNKSKRPFTKSKRSFRRRLPPIQ.

Belongs to the bacterial ribosomal protein bS18 family. In terms of assembly, part of the 30S ribosomal subunit.

The protein localises to the plastid. The protein resides in the chloroplast. The polypeptide is Small ribosomal subunit protein bS18c (Lobularia maritima (Sweet alyssum)).